Here is a 135-residue protein sequence, read N- to C-terminus: Sex-regulated protein janus-A (135 aa).

Substrate is bound at residue Lys-37. His-63 functions as the Proton acceptor in the catalytic mechanism. 104–106 (SQG) contributes to the substrate binding site.

It belongs to the janus family. Somatic and germline cells. Isoform B is expressed in both sexes and in somatic and germ line cells. Isoform A is expressed in males and is germ line specific.

Its function is as follows. JanA and janB regulate somatic sex differentiation. This chain is Sex-regulated protein janus-A (janA), found in Drosophila melanogaster (Fruit fly).